The sequence spans 288 residues: Syntaxin PEP12 (288 aa).

Residues 1-268 (MSEDEFFGGD…RYQKRTSRWR (268 aa)) are Cytoplasmic-facing. A phosphoserine mark is found at Ser-2 and Ser-23. Residues 195 to 257 (QNLIEQRDQE…QLASDELRKA (63 aa)) enclose the t-SNARE coiled-coil homology domain. Residues 269 to 288 (VYLLIVLLVMLLFIFLIMKL) form a helical; Anchor for type IV membrane protein membrane-spanning segment.

Belongs to the syntaxin family. Ubiquitinated.

The protein localises to the membrane. Functionally, plays a role in the sorting and targeting of vacuolar proteases. The protein is Syntaxin PEP12 (PEP12) of Saccharomyces cerevisiae (strain ATCC 204508 / S288c) (Baker's yeast).